The primary structure comprises 102 residues: RNA-binding protein Hfq (102 aa).

The 60-residue stretch at 9-68 (DPFLNALRRERVPVSIYLVNGIKLQGQIESFDQFVILLKNTVSQMVYKHAISTVVPSRPV) folds into the Sm domain. The interval 63–102 (VPSRPVSHHSNNASGGTSSNYHHGSSAQNTSAQQDSEETE) is disordered. A compositionally biased stretch (polar residues) spans 70-96 (HHSNNASGGTSSNYHHGSSAQNTSAQQ).

This sequence belongs to the Hfq family. In terms of assembly, homohexamer.

Functionally, RNA chaperone that binds small regulatory RNA (sRNAs) and mRNAs to facilitate mRNA translational regulation in response to envelope stress, environmental stress and changes in metabolite concentrations. Also binds with high specificity to tRNAs. The protein is RNA-binding protein Hfq of Shigella boydii serotype 18 (strain CDC 3083-94 / BS512).